We begin with the raw amino-acid sequence, 353 residues long: BLOC-1-related complex subunit 6 (353 aa).

A disordered region spans residues 23-194; it reads AIFGDGPGQT…SGAGGGRRAT (172 aa). The span at 102 to 126 shows a compositional bias: basic and acidic residues; the sequence is FDLHGSSRRKDPEPPEAKPESERVC. Residues serine 130 and serine 166 each carry the phosphoserine modification. Residues 172–191 show a composition bias toward gly residues; that stretch reads GACGGPASSGGAESGAGGGR. The residue at position 194 (threonine 194) is a Phosphothreonine. Position 197 is a phosphoserine (serine 197). The interval 225–253 is disordered; sequence LSGAPQPPPPAPTRPCSAPTPTPAIPPID. The segment covering 229-253 has biased composition (pro residues); sequence PQPPPPAPTRPCSAPTPTPAIPPID.

The protein belongs to the BORCS6 family. In terms of assembly, component of the BLOC-one-related complex (BORC) which is composed of BLOC1S1, BLOC1S2, BORCS5, BORCS6, BORCS7, BORCS8, KXD1 and SNAPIN.

It is found in the lysosome membrane. In terms of biological role, as part of the BORC complex may play a role in lysosomes movement and localization at the cell periphery. Associated with the cytosolic face of lysosomes, the BORC complex may recruit ARL8B and couple lysosomes to microtubule plus-end-directed kinesin motor. The sequence is that of BLOC-1-related complex subunit 6 from Bos taurus (Bovine).